The chain runs to 441 residues: Protein MONOCULM 1 (441 aa).

The segment at 1–33 is disordered; the sequence is MLRSLHSSSSSDTDNNSGGCKNNGGGGGEAAAA. Over residues 7–20 the composition is skewed to low complexity; the sequence is SSSSSDTDNNSGGC. Positions 21–33 are enriched in gly residues; sequence KNNGGGGGEAAAA. The GRAS domain maps to 41 to 437; the sequence is RAVAAAAPST…RPLLSVSAWQ (397 aa). The tract at residues 48–126 is leucine repeat I (LRI); that stretch reads PSTRDLLLAC…GAARPASSGA (79 aa). Residues 127–195 form a VHIID region; it reads YLAFNQIAPF…LGPPEVRVTG (69 aa). The VHIID motif lies at 158 to 162; the sequence is VHILD. Residues 205-256 are leucine repeat II (LRII); the sequence is RTGNRLRAFARSIHLPFHFTPLLLSCATTAPHHVAGTSTGAAAAASTAAAAT. The PFYRE stretch occupies residues 266 to 361; it reads LAVNCVMFLH…QEVLGREIEA (96 aa). The segment at 364-437 is SAW; the sequence is GPSGGRWWRG…RPLLSVSAWQ (74 aa).

It belongs to the GRAS family. As to expression, expressed in a small number of epidermal or subepidermal cells at the leaf axils, in axillary meristems and the entire tiller buds. Undetected in the shoot apical meristem.

Its subcellular location is the nucleus. Its function is as follows. Putative transcription regulator that controls rice tillering by initiating axillary buds and promoting their outgrowth. Rice tiller is a specialized grain-bearing branch that is formed on the unelongated basal internode and grows independently of the mother stem (culm) by means of its own adventitious roots. In Oryza sativa subsp. japonica (Rice), this protein is Protein MONOCULM 1.